Consider the following 551-residue polypeptide: Arginine--tRNA ligase (551 aa).

Positions 123-133 (ANPTGPLTIGR) match the 'HIGH' region motif.

It belongs to the class-I aminoacyl-tRNA synthetase family. In terms of assembly, monomer.

Its subcellular location is the cytoplasm. It carries out the reaction tRNA(Arg) + L-arginine + ATP = L-arginyl-tRNA(Arg) + AMP + diphosphate. This chain is Arginine--tRNA ligase, found in Chlorobium phaeobacteroides (strain DSM 266 / SMG 266 / 2430).